The sequence spans 221 residues: ATP synthase subunit a 1 (221 aa).

The next 5 helical transmembrane spans lie at 20 to 40, 78 to 98, 108 to 128, 174 to 194, and 196 to 216; these read LTIVTTWALMLLLAGGSALIT, YLPFIAALFLFIATANLCTVI, LSTTAALALSVFIAVPLFGIA, MILVILLTISPLVFPVLMNIL, and LLTGMVQAYIFSILATVYIAA.

The protein belongs to the ATPase A chain family. F-type ATPases have 2 components, CF(1) - the catalytic core - and CF(0) - the membrane proton channel. CF(1) has five subunits: alpha(3), beta(3), gamma(1), delta(1), epsilon(1). CF(0) has four main subunits: a, b, b' and c.

The protein resides in the cell inner membrane. Functionally, key component of the proton channel; it plays a direct role in the translocation of protons across the membrane. This is ATP synthase subunit a 1 from Chlorobaculum tepidum (strain ATCC 49652 / DSM 12025 / NBRC 103806 / TLS) (Chlorobium tepidum).